A 395-amino-acid chain; its full sequence is S-adenosylmethionine synthase (395 aa).

An ATP-binding site is contributed by histidine 15. Aspartate 17 lines the Mg(2+) pocket. Glutamate 43 is a binding site for K(+). Positions 56 and 99 each coordinate L-methionine. The flexible loop stretch occupies residues glutamine 99–glutamate 109. ATP-binding positions include aspartate 173–lysine 175, arginine 239–phenylalanine 240, aspartate 248, arginine 254–lysine 255, alanine 271, and lysine 275. Aspartate 248 provides a ligand contact to L-methionine. Position 279 (lysine 279) interacts with L-methionine.

Belongs to the AdoMet synthase family. In terms of assembly, homotetramer; dimer of dimers. It depends on Mg(2+) as a cofactor. The cofactor is K(+).

It is found in the cytoplasm. It carries out the reaction L-methionine + ATP + H2O = S-adenosyl-L-methionine + phosphate + diphosphate. It participates in amino-acid biosynthesis; S-adenosyl-L-methionine biosynthesis; S-adenosyl-L-methionine from L-methionine: step 1/1. Catalyzes the formation of S-adenosylmethionine (AdoMet) from methionine and ATP. The overall synthetic reaction is composed of two sequential steps, AdoMet formation and the subsequent tripolyphosphate hydrolysis which occurs prior to release of AdoMet from the enzyme. The sequence is that of S-adenosylmethionine synthase from Desulforudis audaxviator (strain MP104C).